Consider the following 47-residue polypeptide: uncharacterized protein (47 aa).

The signal sequence occupies residues 1 to 18 (MKKWLLIIAGALIISACA). The disordered stretch occupies residues 28–47 (EGSHSGVKFDKDSRQWGLNQ).

This is an uncharacterized protein from Haemophilus influenzae (strain ATCC 51907 / DSM 11121 / KW20 / Rd).